Reading from the N-terminus, the 299-residue chain is Tyrosine recombinase XerC (299 aa).

The region spanning 3–87 (PQCQSYLQQF…AIKQWGEFLL (85 aa)) is the Core-binding (CB) domain. Positions 108–287 (PLPKNIDVDS…DFQHLAKVYD (180 aa)) constitute a Tyr recombinase domain. Residues R147, K171, H239, R242, and H265 contribute to the active site. Y274 functions as the O-(3'-phospho-DNA)-tyrosine intermediate in the catalytic mechanism.

This sequence belongs to the 'phage' integrase family. XerC subfamily. In terms of assembly, forms a cyclic heterotetrameric complex composed of two molecules of XerC and two molecules of XerD.

The protein localises to the cytoplasm. Site-specific tyrosine recombinase, which acts by catalyzing the cutting and rejoining of the recombining DNA molecules. The XerC-XerD complex is essential to convert dimers of the bacterial chromosome into monomers to permit their segregation at cell division. It also contributes to the segregational stability of plasmids. The sequence is that of Tyrosine recombinase XerC from Shewanella sp. (strain ANA-3).